Reading from the N-terminus, the 193-residue chain is Superoxide dismutase [Fe] (193 aa).

4 residues coordinate Fe cation: His27, His74, Asp157, and His161.

The protein belongs to the iron/manganese superoxide dismutase family. As to quaternary structure, homodimer. It depends on Fe cation as a cofactor.

The catalysed reaction is 2 superoxide + 2 H(+) = H2O2 + O2. In terms of biological role, destroys superoxide anion radicals which are normally produced within the cells and which are toxic to biological systems. In Coxiella burnetii (strain RSA 493 / Nine Mile phase I), this protein is Superoxide dismutase [Fe] (sodB).